Consider the following 581-residue polypeptide: Arginine--tRNA ligase (581 aa).

The short motif at 126-136 (PNLAKEMHVGH) is the 'HIGH' region element.

Belongs to the class-I aminoacyl-tRNA synthetase family. Monomer.

It is found in the cytoplasm. The catalysed reaction is tRNA(Arg) + L-arginine + ATP = L-arginyl-tRNA(Arg) + AMP + diphosphate. The sequence is that of Arginine--tRNA ligase from Shewanella putrefaciens (strain CN-32 / ATCC BAA-453).